Here is a 257-residue protein sequence, read N- to C-terminus: Small ribosomal subunit protein uS3 (257 aa).

The KH type-2 domain occupies 39–112; sequence IRKFLNKKYN…EIVFNVVEVR (74 aa). Residues 217–257 form a disordered region; sequence HEELRKERQSSASSNHGGGKRRPSRKGPRRSQEDAATEGGN. Over residues 234-245 the composition is skewed to basic residues; that stretch reads GGKRRPSRKGPR.

Belongs to the universal ribosomal protein uS3 family. Part of the 30S ribosomal subunit. Forms a tight complex with proteins S10 and S14.

Functionally, binds the lower part of the 30S subunit head. Binds mRNA in the 70S ribosome, positioning it for translation. This chain is Small ribosomal subunit protein uS3, found in Haploplasma axanthum (Acholeplasma axanthum).